Reading from the N-terminus, the 368-residue chain is Quinolinate synthase (368 aa).

Iminosuccinate-binding residues include His46 and Ser63. Cys110 provides a ligand contact to [4Fe-4S] cluster. Residues 141 to 143 and Ser162 contribute to the iminosuccinate site; that span reads YVN. Residue Cys230 coordinates [4Fe-4S] cluster. Residues 256 to 258 and Thr273 each bind iminosuccinate; that span reads HPE. Cys320 contributes to the [4Fe-4S] cluster binding site.

It belongs to the quinolinate synthase family. Type 3 subfamily. It depends on [4Fe-4S] cluster as a cofactor.

The protein localises to the cytoplasm. It catalyses the reaction iminosuccinate + dihydroxyacetone phosphate = quinolinate + phosphate + 2 H2O + H(+). The protein operates within cofactor biosynthesis; NAD(+) biosynthesis; quinolinate from iminoaspartate: step 1/1. Its function is as follows. Catalyzes the condensation of iminoaspartate with dihydroxyacetone phosphate to form quinolinate. The polypeptide is Quinolinate synthase (Bacillus cereus (strain Q1)).